The sequence spans 141 residues: Hemoglobin subunit alpha (141 aa).

A Globin domain is found at 1 to 141; sequence VLSANDKANV…VSTVLTSKYR (141 aa). Position 3 is a phosphoserine (Ser-3). 2 positions are modified to N6-succinyllysine: Lys-7 and Lys-11. At Lys-16 the chain carries N6-acetyllysine; alternate. An N6-succinyllysine; alternate modification is found at Lys-16. Position 24 is a phosphotyrosine (Tyr-24). Residue Ser-35 is modified to Phosphoserine. An N6-succinyllysine modification is found at Lys-40. Ser-49 carries the post-translational modification Phosphoserine. Residue His-58 coordinates O2. Residue His-87 participates in heme b binding. A Phosphoserine modification is found at Ser-102. A Phosphothreonine modification is found at Thr-108. 2 positions are modified to phosphoserine: Ser-124 and Ser-131. Thr-134 and Thr-137 each carry phosphothreonine. A Phosphoserine modification is found at Ser-138.

The protein belongs to the globin family. Heterotetramer of two alpha chains and two beta chains. As to expression, red blood cells.

Involved in oxygen transport from the lung to the various peripheral tissues. In terms of biological role, hemopressin acts as an antagonist peptide of the cannabinoid receptor CNR1. Hemopressin-binding efficiently blocks cannabinoid receptor CNR1 and subsequent signaling. The protein is Hemoglobin subunit alpha (HBA) of Suncus murinus (Asian house shrew).